A 188-amino-acid polypeptide reads, in one-letter code: Elongation factor P (188 aa).

Belongs to the elongation factor P family.

The protein resides in the cytoplasm. Its pathway is protein biosynthesis; polypeptide chain elongation. Functionally, involved in peptide bond synthesis. Stimulates efficient translation and peptide-bond synthesis on native or reconstituted 70S ribosomes in vitro. Probably functions indirectly by altering the affinity of the ribosome for aminoacyl-tRNA, thus increasing their reactivity as acceptors for peptidyl transferase. The chain is Elongation factor P from Gluconobacter oxydans (strain 621H) (Gluconobacter suboxydans).